A 155-amino-acid polypeptide reads, in one-letter code: Probable cyclic pyranopterin monophosphate synthase (155 aa).

Residues 74-76 (MCH) and 110-111 (ME) contribute to the substrate site. Asp-125 is a catalytic residue.

This sequence belongs to the MoaC family. In terms of assembly, homohexamer; trimer of dimers.

It catalyses the reaction (8S)-3',8-cyclo-7,8-dihydroguanosine 5'-triphosphate = cyclic pyranopterin phosphate + diphosphate. It functions in the pathway cofactor biosynthesis; molybdopterin biosynthesis. Functionally, catalyzes the conversion of (8S)-3',8-cyclo-7,8-dihydroguanosine 5'-triphosphate to cyclic pyranopterin monophosphate (cPMP). This Methanoregula boonei (strain DSM 21154 / JCM 14090 / 6A8) protein is Probable cyclic pyranopterin monophosphate synthase.